A 199-amino-acid polypeptide reads, in one-letter code: MKIVLASANKGKIKEFERLLPNDEIVAFSEILGKIEIDEDKDTFKGNAIKKAQTIYDELQKINFGDVVVISDDSGISVPVLGNAPGVYSARYAGLNASDKENNEKLKAELNKLGLEKTPAFYTACIAIVYKNEVYTVHGWMYGEVLNKEIGTNGFGYDPMFIPNGYDKTLGELDEGVKKEFSHRSKALKLAMKVLEVIL.

7-12 is a substrate binding site; the sequence is SANKGK. The Mg(2+) site is built by Asp-38 and Asp-73. The active-site Proton acceptor is Asp-73. Substrate is bound by residues Ser-74, 155–158, Lys-178, and 183–184; these read FGYD and HR.

Belongs to the HAM1 NTPase family. As to quaternary structure, homodimer. Mg(2+) is required as a cofactor.

It carries out the reaction XTP + H2O = XMP + diphosphate + H(+). It catalyses the reaction dITP + H2O = dIMP + diphosphate + H(+). The catalysed reaction is ITP + H2O = IMP + diphosphate + H(+). Pyrophosphatase that catalyzes the hydrolysis of nucleoside triphosphates to their monophosphate derivatives, with a high preference for the non-canonical purine nucleotides XTP (xanthosine triphosphate), dITP (deoxyinosine triphosphate) and ITP. Seems to function as a house-cleaning enzyme that removes non-canonical purine nucleotides from the nucleotide pool, thus preventing their incorporation into DNA/RNA and avoiding chromosomal lesions. This Aliarcobacter butzleri (strain RM4018) (Arcobacter butzleri) protein is dITP/XTP pyrophosphatase.